The following is a 329-amino-acid chain: Gut-specific cysteine proteinase (329 aa).

An N-terminal signal peptide occupies residues 1–15 (MKFLILTALCAVTLA). Positions 16–84 (FVPINHQSAV…ATEQEVVLAS (69 aa)) are cleaved as a propeptide — activation peptide. Intrachain disulfides connect Cys98-Cys127, Cys110-Cys155, Cys146-Cys204, Cys147-Cys151, Cys183-Cys208, and Cys191-Cys196. Cys113 is a catalytic residue. Active-site residues include His275 and Asn295.

The protein belongs to the peptidase C1 family. As to expression, larvae exhibit strong expression in gut cells and weak expression in hypodermal cells. Adults exhibit the reverse: strong expression in hypodermal cells and weaker expression in gut cells.

In terms of biological role, thiol protease. Has a role as a digestive enzyme. The protein is Gut-specific cysteine proteinase (cpr-1) of Caenorhabditis elegans.